A 46-amino-acid chain; its full sequence is Mu-segestritoxin-Sf1b (46 aa).

4 disulfides stabilise this stretch: Cys3–Cys19, Cys10–Cys22, Cys18–Cys42, and Cys24–Cys40. The tract at residues 31 to 33 (RPW) is keys region for toxin activity.

It belongs to the neurotoxin 16 (SFI) family. As to expression, expressed by the venom gland.

Its subcellular location is the secreted. Insecticidal toxin. Causes flaccid paralysis followed by death when injected into Heliothis virescens larvae. Does not induce any toxic effects when injected intravenously into adult mice at a dose of 1.25 mg/kg body weight. In Segestria florentina (Tube-web spider), this protein is Mu-segestritoxin-Sf1b.